Reading from the N-terminus, the 492-residue chain is GTPase-activating protein MSB4 (492 aa).

The Rab-GAP TBC domain maps to 147-367; sequence GIPAEWRGNA…RIWDCLFYEE (221 aa).

The protein localises to the cytoplasm. Its subcellular location is the bud. The protein resides in the bud neck. Its function is as follows. Regulates exocytosis by functioning as a GAP for SEC4. Also required for efficient polarization of the actin patches. The chain is GTPase-activating protein MSB4 (MSB4) from Saccharomyces cerevisiae (strain ATCC 204508 / S288c) (Baker's yeast).